The chain runs to 102 residues: uncharacterized protein (102 aa).

Residues 1–13 (PSSSQALSVPSLS) are compositionally biased toward low complexity. The tract at residues 1 to 24 (PSSSQALSVPSLSSEKKTASPTCV) is disordered.

This is an uncharacterized protein from Human cytomegalovirus (strain AD169) (HHV-5).